The primary structure comprises 359 residues: Dual-specificity RNA methyltransferase RlmN (359 aa).

Catalysis depends on glutamate 90, which acts as the Proton acceptor. Residues 109–342 (HQERYTVCIS…CTIRESKGLD (234 aa)) form the Radical SAM core domain. The cysteines at positions 116 and 347 are disulfide-linked. Residues cysteine 123, cysteine 127, and cysteine 130 each contribute to the [4Fe-4S] cluster site. S-adenosyl-L-methionine contacts are provided by residues 173-174 (GE), serine 205, 228-230 (SLH), and asparagine 304. Residue cysteine 347 is the S-methylcysteine intermediate of the active site.

This sequence belongs to the radical SAM superfamily. RlmN family. Requires [4Fe-4S] cluster as cofactor.

It localises to the cytoplasm. The enzyme catalyses adenosine(2503) in 23S rRNA + 2 reduced [2Fe-2S]-[ferredoxin] + 2 S-adenosyl-L-methionine = 2-methyladenosine(2503) in 23S rRNA + 5'-deoxyadenosine + L-methionine + 2 oxidized [2Fe-2S]-[ferredoxin] + S-adenosyl-L-homocysteine. It catalyses the reaction adenosine(37) in tRNA + 2 reduced [2Fe-2S]-[ferredoxin] + 2 S-adenosyl-L-methionine = 2-methyladenosine(37) in tRNA + 5'-deoxyadenosine + L-methionine + 2 oxidized [2Fe-2S]-[ferredoxin] + S-adenosyl-L-homocysteine. Its function is as follows. Specifically methylates position 2 of adenine 2503 in 23S rRNA and position 2 of adenine 37 in tRNAs. m2A2503 modification seems to play a crucial role in the proofreading step occurring at the peptidyl transferase center and thus would serve to optimize ribosomal fidelity. The polypeptide is Dual-specificity RNA methyltransferase RlmN (Sulfurovum sp. (strain NBC37-1)).